We begin with the raw amino-acid sequence, 599 residues long: Phosphomethylpyrimidine synthase (599 aa).

The segment covering 1–16 (MSAASANSVTNPSAWE) has biased composition (polar residues). 2 disordered regions span residues 1–53 (MSAA…PNDP) and 82–108 (EDTEEYAGRERNLADDGRSAQRRGAAS). Residues 87–100 (YAGRERNLADDGRS) are compositionally biased toward basic and acidic residues. Substrate-binding positions include asparagine 192, methionine 221, tyrosine 250, histidine 286, 306–308 (SRG), 347–350 (DGLR), and glutamate 386. Histidine 390 serves as a coordination point for Zn(2+). Substrate is bound at residue tyrosine 413. Histidine 454 serves as a coordination point for Zn(2+). Residues cysteine 534, cysteine 537, and cysteine 542 each coordinate [4Fe-4S] cluster.

It belongs to the ThiC family. [4Fe-4S] cluster is required as a cofactor.

It catalyses the reaction 5-amino-1-(5-phospho-beta-D-ribosyl)imidazole + S-adenosyl-L-methionine = 4-amino-2-methyl-5-(phosphooxymethyl)pyrimidine + CO + 5'-deoxyadenosine + formate + L-methionine + 3 H(+). It functions in the pathway cofactor biosynthesis; thiamine diphosphate biosynthesis. Its function is as follows. Catalyzes the synthesis of the hydroxymethylpyrimidine phosphate (HMP-P) moiety of thiamine from aminoimidazole ribotide (AIR) in a radical S-adenosyl-L-methionine (SAM)-dependent reaction. The sequence is that of Phosphomethylpyrimidine synthase from Corynebacterium diphtheriae (strain ATCC 700971 / NCTC 13129 / Biotype gravis).